A 355-amino-acid chain; its full sequence is Probable butyrate kinase (355 aa).

The protein belongs to the acetokinase family.

The protein resides in the cytoplasm. It carries out the reaction butanoate + ATP = butanoyl phosphate + ADP. In Listeria monocytogenes serotype 4a (strain HCC23), this protein is Probable butyrate kinase.